The primary structure comprises 792 residues: DEAD-box ATP-dependent RNA helicase 40 (792 aa).

Residues 1–16 show a composition bias toward low complexity; sequence MSAGTAPAAPRYAPDD. Disordered regions lie at residues 1 to 25 and 44 to 118; these read MSAG…PWRG and TQYE…PLPA. Residues 17-51 enclose the WW domain; sequence PSLPKPWRGLVDGTTGYLYYWNPETNITQYEKPLP. Residues 52–68 are compositionally biased toward pro residues; sequence PEDQLPPPPPLPPPPPR. Basic and acidic residues-rich tracts occupy residues 70–80 and 88–108; these read GRGDRDRDRRD and PRRD…DHRS. A Q motif motif is present at residues 150-178; it reads TSFETGGFPPEILKEIQRAGFSSPTPIQA. In terms of domain architecture, Helicase ATP-binding spans 181–355; it reads WPIALQCQDV…EDLLVHPVQV (175 aa). 194–201 contacts ATP; that stretch reads AKTGSGKT. The DEAD box signature appears at 303 to 306; the sequence is DEAD. The Helicase C-terminal domain occupies 384–528; the sequence is RLEQILRSQD…RVPRDLADMA (145 aa). The tract at residues 523–792 is disordered; that stretch reads DLADMASRGG…NATVQNGGDN (270 aa). Basic and acidic residues-rich tracts occupy residues 543–560 and 572–588; these read TRSD…RYGG and DSSR…DGRS. 2 stretches are compositionally biased toward basic residues: residues 589–599 and 609–654; these read RRSGRGRSRSR and RSPK…RRHE. Residues 668–708 are compositionally biased toward basic and acidic residues; that stretch reads GHGERKRTPEADPSRNHTNHSDPKDDRHPEDGKVGKVDLDR. Residues 725 to 739 are compositionally biased toward polar residues; the sequence is GKTSRSVSPGNQVEG. Positions 764-777 are enriched in acidic residues; sequence DEEEGMIDEDGEIA.

It belongs to the DEAD box helicase family. DDX5/DBP2 subfamily.

It is found in the nucleus. The catalysed reaction is ATP + H2O = ADP + phosphate + H(+). ATP-dependent RNA helicase involved nonsense-mediated mRNA decay and ribosome biogenesis through rRNA processing. The polypeptide is DEAD-box ATP-dependent RNA helicase 40 (Oryza sativa subsp. japonica (Rice)).